We begin with the raw amino-acid sequence, 417 residues long: Equilibrative nucleotide transporter 7 (417 aa).

The next 11 helical transmembrane spans lie at 19–39 (LVCC…LTIT), 54–74 (VLTI…ATKE), 84–104 (IFGY…DLAS), 110–130 (VVAY…DAFV), 143–163 (PDFI…TSVL), 184–204 (LFIG…TLVF), 264–284 (LGIN…GFLY), 293–315 (GDWY…RFIP), 326–346 (KWIT…YFTA), 353–373 (WMLF…VCIF), and 392–412 (MCVF…LWLI).

This sequence belongs to the SLC29A/ENT transporter (TC 2.A.57) family. As to expression, expressed in leaves and flowers.

It is found in the cell membrane. In terms of biological role, nucleoside transporter that can mediate uptake of adenosine, uridine, guanosine or cytidine when expressed in a heterologous system (yeast). This chain is Equilibrative nucleotide transporter 7 (ENT7), found in Arabidopsis thaliana (Mouse-ear cress).